The following is a 276-amino-acid chain: uncharacterized protein (276 aa).

An N-terminal signal peptide occupies residues 1–25; the sequence is MNKKRLLPKASLGALFMLFGTALTA. A lipid anchor (N-palmitoyl cysteine) is attached at C26. Residue C26 is the site of S-diacylglycerol cysteine attachment.

It belongs to the MG439/MG440 family.

It is found in the cell membrane. This is an uncharacterized protein from Mycoplasma pneumoniae (strain ATCC 29342 / M129 / Subtype 1) (Mycoplasmoides pneumoniae).